The primary structure comprises 302 residues: Protoheme IX farnesyltransferase (302 aa).

9 helical membrane-spanning segments follow: residues 28-48 (VVAL…PGVP), 50-70 (WSVL…AAVV), 95-115 (IAPL…MVVL), 122-142 (LTAW…TLFL), 150-170 (IVIG…AVTG), 176-196 (ALLL…ALAI), 221-241 (LHIL…FVTG), 243-263 (SGGI…QYAV), and 282-302 (ITYL…FVPA).

The protein belongs to the UbiA prenyltransferase family. Protoheme IX farnesyltransferase subfamily.

Its subcellular location is the cell inner membrane. The catalysed reaction is heme b + (2E,6E)-farnesyl diphosphate + H2O = Fe(II)-heme o + diphosphate. It functions in the pathway porphyrin-containing compound metabolism; heme O biosynthesis; heme O from protoheme: step 1/1. Functionally, converts heme B (protoheme IX) to heme O by substitution of the vinyl group on carbon 2 of heme B porphyrin ring with a hydroxyethyl farnesyl side group. This Marinobacter nauticus (strain ATCC 700491 / DSM 11845 / VT8) (Marinobacter aquaeolei) protein is Protoheme IX farnesyltransferase.